The chain runs to 218 residues: 3,4-dihydroxy-2-butanone 4-phosphate synthase (218 aa).

D-ribulose 5-phosphate is bound by residues 38-39, D43, 151-155, and E175; these read RE and RRGHT. A Mg(2+)-binding site is contributed by E39. Mg(2+) is bound at residue H154.

Belongs to the DHBP synthase family. In terms of assembly, homodimer. Mg(2+) serves as cofactor. It depends on Mn(2+) as a cofactor.

It carries out the reaction D-ribulose 5-phosphate = (2S)-2-hydroxy-3-oxobutyl phosphate + formate + H(+). Its pathway is cofactor biosynthesis; riboflavin biosynthesis; 2-hydroxy-3-oxobutyl phosphate from D-ribulose 5-phosphate: step 1/1. Its function is as follows. Catalyzes the conversion of D-ribulose 5-phosphate to formate and 3,4-dihydroxy-2-butanone 4-phosphate. This Shewanella frigidimarina (strain NCIMB 400) protein is 3,4-dihydroxy-2-butanone 4-phosphate synthase.